A 476-amino-acid polypeptide reads, in one-letter code: uncharacterized protein (476 aa).

The protein belongs to the herpesviridae US22 family.

This is an uncharacterized protein from Homo sapiens (Human).